The chain runs to 176 residues: Transmembrane protein 238 (176 aa).

Residues 1–22 are disordered; that stretch reads MAAAPAVCASQGSPPGAPSAPA. At 1–36 the chain is on the cytoplasmic side; the sequence is MAAAPAVCASQGSPPGAPSAPAAAPAPAAGLGRCRM. Positions 9–22 are enriched in low complexity; the sequence is ASQGSPPGAPSAPA. The helical transmembrane segment at 37–57 threads the bilayer; it reads ALLLAVALDVAGMAALLTGVF. The Extracellular portion of the chain corresponds to 58–69; that stretch reads AQLQVRGRDFGD. A helical transmembrane segment spans residues 70–90; sequence LLIYSGALLVFLSLLGWILWY. Residues 91–176 are Cytoplasmic-facing; sequence TGNIEISRQE…GPGAAGAGSE (86 aa). A compositionally biased stretch (low complexity) spans 124 to 137; sequence SAPAAAGQRPAPGS. The tract at residues 124–157 is disordered; that stretch reads SAPAAAGQRPAPGSRRARRAARAPPPPAAGSRRV. Serine 175 carries the phosphoserine modification.

Its subcellular location is the membrane. This chain is Transmembrane protein 238 (TMEM238), found in Homo sapiens (Human).